Reading from the N-terminus, the 300-residue chain is Lysenin-related protein 2 (300 aa).

An N-terminal cap domain region spans residues 12-35; that stretch reads EQIEVDVVAVWKEGYVYENRGSTS. Residues 36–109 form a beta-hairpin domain region; that stretch reads VEQKIKITKG…SKEIEHTITI (74 aa). The segment at 110 to 158 is N-terminal cap domain; that stretch reads PPTSKFTRWQLNADVGGADIEYMYLIDEVTPIGGTLSIPQVIKSRAKIL. Residues 159–299 are C-terminal receptor-binding domain; it reads VGREIYLGET…EDKWILEVVK (141 aa). An N-(acyl)-sphingosylphosphocholine-binding residues include Lys-187, Ser-229, Tyr-235, and Tyr-284. Cys-274 and Cys-285 are oxidised to a cystine.

It belongs to the lysenin family. In terms of assembly, binds to sphingomyelin as a monomer by using its C-terminal domain. Forms a nonamer when sphingomyelin/LRP-2 ratio is lower than ca 500. Oligomerization, but not binding, is influenced by the fluidity of sphingomyelin. As to expression, expressed by coelomocytes.

The protein localises to the secreted. It is found in the target cell membrane. Functionally, pore-forming toxin that specifically binds sphingomyelin in the plasma membrane of various cells. Has hemolytic activity. It also has antibacterial activities against B.megaterium. The protein is Lysenin-related protein 2 of Eisenia fetida (Red wiggler worm).